The primary structure comprises 322 residues: Nitrilase (322 aa).

The 279-residue stretch at 5-283 (VRVGAVQSEP…EAILTADIDL (279 aa)) folds into the CN hydrolase domain. The active-site Proton acceptor is glutamate 45. Lysine 127 is a catalytic residue. The active-site Nucleophile is the cysteine 162.

The protein belongs to the carbon-nitrogen hydrolase superfamily. Nitrilase family.

The catalysed reaction is a nitrile + 2 H2O = a carboxylate + NH4(+). Nitrilase that hydrolyzes preferentially 4-cyanopyridine. The chain is Nitrilase from Talaromyces marneffei (strain ATCC 18224 / CBS 334.59 / QM 7333) (Penicillium marneffei).